The following is a 67-amino-acid chain: DNA-directed RNA polymerase subunit omega (67 aa).

The protein belongs to the RNA polymerase subunit omega family. In terms of assembly, the RNAP catalytic core consists of 2 alpha, 1 beta, 1 beta' and 1 omega subunit. When a sigma factor is associated with the core the holoenzyme is formed, which can initiate transcription.

It carries out the reaction RNA(n) + a ribonucleoside 5'-triphosphate = RNA(n+1) + diphosphate. Its function is as follows. Promotes RNA polymerase assembly. Latches the N- and C-terminal regions of the beta' subunit thereby facilitating its interaction with the beta and alpha subunits. This chain is DNA-directed RNA polymerase subunit omega, found in Delftia acidovorans (strain DSM 14801 / SPH-1).